The primary structure comprises 114 residues: uncharacterized protein (114 aa).

C40, C106, and C108 together coordinate Fe cation.

The protein belongs to the HesB/IscA family. Ycf83 subfamily.

It localises to the plastid. It is found in the chloroplast. This is an uncharacterized protein from Pyropia yezoensis (Susabi-nori).